Consider the following 61-residue polypeptide: MIHAHSNARLLRWAILAIAPVTLGACAPNGPPGLPYPDGKPLIPINTAAPEQGSSCQTRAP.

Positions 1–25 (MIHAHSNARLLRWAILAIAPVTLGA) are cleaved as a signal peptide. Positions 37–61 (PDGKPLIPINTAAPEQGSSCQTRAP) are disordered. Over residues 52–61 (QGSSCQTRAP) the composition is skewed to polar residues.

The protein is Type IV secretion system protein PtlI homolog (ptlI) of Bordetella parapertussis (strain 12822 / ATCC BAA-587 / NCTC 13253).